We begin with the raw amino-acid sequence, 466 residues long: Acetyl-coenzyme A carboxylase carboxyl transferase subunit beta, chloroplastic (466 aa).

The region spanning 198–466 (LWIQCENCYE…FPLNQNSIGQ (269 aa)) is the CoA carboxyltransferase N-terminal domain. Cys202, Cys205, Cys221, and Cys224 together coordinate Zn(2+). The segment at 202–224 (CENCYELNYKKLLKSKMRICDEC) adopts a C4-type zinc-finger fold.

The protein belongs to the AccD/PCCB family. As to quaternary structure, acetyl-CoA carboxylase is a heterohexamer composed of biotin carboxyl carrier protein, biotin carboxylase and 2 subunits each of ACCase subunit alpha and ACCase plastid-coded subunit beta (accD). The cofactor is Zn(2+).

The protein resides in the plastid. It localises to the chloroplast stroma. It catalyses the reaction N(6)-carboxybiotinyl-L-lysyl-[protein] + acetyl-CoA = N(6)-biotinyl-L-lysyl-[protein] + malonyl-CoA. It functions in the pathway lipid metabolism; malonyl-CoA biosynthesis; malonyl-CoA from acetyl-CoA: step 1/1. Component of the acetyl coenzyme A carboxylase (ACC) complex. Biotin carboxylase (BC) catalyzes the carboxylation of biotin on its carrier protein (BCCP) and then the CO(2) group is transferred by the transcarboxylase to acetyl-CoA to form malonyl-CoA. This Fagopyrum esculentum subsp. ancestrale (Wild buckwheat) protein is Acetyl-coenzyme A carboxylase carboxyl transferase subunit beta, chloroplastic.